The following is a 99-amino-acid chain: Large ribosomal subunit protein uL23 (99 aa).

It belongs to the universal ribosomal protein uL23 family. Part of the 50S ribosomal subunit. Contacts protein L29, and trigger factor when it is bound to the ribosome.

Functionally, one of the early assembly proteins it binds 23S rRNA. One of the proteins that surrounds the polypeptide exit tunnel on the outside of the ribosome. Forms the main docking site for trigger factor binding to the ribosome. The protein is Large ribosomal subunit protein uL23 of Stutzerimonas stutzeri (strain A1501) (Pseudomonas stutzeri).